Reading from the N-terminus, the 114-residue chain is Vacuolar ATPase assembly integral membrane protein VMA21 (114 aa).

Topologically, residues 1 to 39 (MATRRIISQEKTLLEKDDSIGSSPAADEKSNIAPAVPTS) are cytoplasmic. A helical transmembrane segment spans residues 40 to 60 (VIMKLLAFTLGMIVIPIGSYF). Over 61 to 73 (ATVDSVFNGNSTY) the chain is Lumenal. A helical transmembrane segment spans residues 74–94 (AGALAAIMANVVLIGYIFVAM). Topologically, residues 95-114 (AEDQSDQQEGGGPGDGKKDR) are cytoplasmic. A Prevents secretion from ER motif is present at residues 111–114 (KKDR).

Belongs to the VMA21 family.

The protein localises to the endoplasmic reticulum membrane. It is found in the endoplasmic reticulum-Golgi intermediate compartment membrane. The protein resides in the cytoplasmic vesicle. Its subcellular location is the COPII-coated vesicle membrane. Its function is as follows. Required for the assembly of the V0 complex of the vacuolar ATPase (V-ATPase) in the endoplasmic reticulum. The chain is Vacuolar ATPase assembly integral membrane protein VMA21 from Chaetomium globosum (strain ATCC 6205 / CBS 148.51 / DSM 1962 / NBRC 6347 / NRRL 1970) (Soil fungus).